We begin with the raw amino-acid sequence, 536 residues long: Chaperonin GroEL (536 aa).

Residues 29 to 32 (TLGP), 86 to 90 (DGTTT), Gly412, and Asp493 contribute to the ATP site.

This sequence belongs to the chaperonin (HSP60) family. In terms of assembly, forms a cylinder of 14 subunits composed of two heptameric rings stacked back-to-back. Interacts with the co-chaperonin GroES.

The protein resides in the cytoplasm. It carries out the reaction ATP + H2O + a folded polypeptide = ADP + phosphate + an unfolded polypeptide.. Functionally, together with its co-chaperonin GroES, plays an essential role in assisting protein folding. The GroEL-GroES system forms a nano-cage that allows encapsulation of the non-native substrate proteins and provides a physical environment optimized to promote and accelerate protein folding. In Aster yellows witches'-broom phytoplasma (strain AYWB), this protein is Chaperonin GroEL.